We begin with the raw amino-acid sequence, 474 residues long: Trigger factor (474 aa).

Positions 165-250 (GDRVTIDYLG…VKTVSKPDEL (86 aa)) constitute a PPIase FKBP-type domain. Over residues 451-467 (VKKKTASDNKKSNEIKK) the composition is skewed to basic and acidic residues. Residues 451–474 (VKKKTASDNKKSNEIKKKSTMKKV) form a disordered region.

It belongs to the FKBP-type PPIase family. Tig subfamily.

The protein localises to the cytoplasm. It catalyses the reaction [protein]-peptidylproline (omega=180) = [protein]-peptidylproline (omega=0). In terms of biological role, involved in protein export. Acts as a chaperone by maintaining the newly synthesized protein in an open conformation. Functions as a peptidyl-prolyl cis-trans isomerase. The protein is Trigger factor of Bartonella bacilliformis (strain ATCC 35685 / KC583 / Herrer 020/F12,63).